We begin with the raw amino-acid sequence, 220 residues long: Uracil-DNA glycosylase (220 aa).

The Proton acceptor role is filled by D65.

This sequence belongs to the uracil-DNA glycosylase (UDG) superfamily. UNG family.

Its subcellular location is the cytoplasm. It carries out the reaction Hydrolyzes single-stranded DNA or mismatched double-stranded DNA and polynucleotides, releasing free uracil.. Excises uracil residues from the DNA which can arise as a result of misincorporation of dUMP residues by DNA polymerase or due to deamination of cytosine. The sequence is that of Uracil-DNA glycosylase from Azobacteroides pseudotrichonymphae genomovar. CFP2.